Reading from the N-terminus, the 101-residue chain is B3 domain-containing protein At1g08985 (101 aa).

The segment at residues 7-101 (IVKTLSETDC…WQNTKFIFSM (95 aa)) is a DNA-binding region (TF-B3).

It is found in the nucleus. This chain is B3 domain-containing protein At1g08985, found in Arabidopsis thaliana (Mouse-ear cress).